Consider the following 144-residue polypeptide: Large ribosomal subunit protein uL15 (144 aa).

The disordered stretch occupies residues 1–62; it reads MELNNLKPAE…GQMPLQRRLP (62 aa). Over residues 21–31 the composition is skewed to gly residues; that stretch reads RGIGSGLGKTA.

Belongs to the universal ribosomal protein uL15 family. Part of the 50S ribosomal subunit.

In terms of biological role, binds to the 23S rRNA. The protein is Large ribosomal subunit protein uL15 of Paraburkholderia phymatum (strain DSM 17167 / CIP 108236 / LMG 21445 / STM815) (Burkholderia phymatum).